The following is a 610-amino-acid chain: UvrABC system protein C (610 aa).

Residues 16–94 (SQPGVYRMYD…IKLYQPRYNV (79 aa)) enclose the GIY-YIG domain. A UVR domain is found at 204–239 (DQVLTQLIARMEKASQDLAFEEAARIRDQIQAVRRV).

This sequence belongs to the UvrC family. As to quaternary structure, interacts with UvrB in an incision complex.

The protein localises to the cytoplasm. Its function is as follows. The UvrABC repair system catalyzes the recognition and processing of DNA lesions. UvrC both incises the 5' and 3' sides of the lesion. The N-terminal half is responsible for the 3' incision and the C-terminal half is responsible for the 5' incision. The protein is UvrABC system protein C of Salmonella paratyphi A (strain ATCC 9150 / SARB42).